Reading from the N-terminus, the 338-residue chain is MSSNFEANNNNNGEKQLVCVTGAGGFIGSWVVKELLIRGYHVRGTARDPADSKNAHLLELEGADERLSLCRADVLDAASLRAAFSGCHGVFHVASPVSNDPDLVPVAVEGTRNVINAAADMGVRRVVFTSSYGAVHMNPNRSPDAVLDETCWSDYEFCKQTDNLYCCAKMMAEMTATEEAAKRGLELAVVVPSMTMGPMLQQTLNFSTNHVARYLMGTKKSYPNAVAAYVDVRDVARAHVLVYERPEARGRYLCIGTVLHRAELLRMLRELFPRYPATAKCEDDGKPMAKPYKFSNQRLKDLGLEFTPLRKSLNEAVLCMQQKGHLPLIYPVPKRAYL.

Residues 22–28 (GAGGFIG), Arg47, Lys53, 73–74 (DV), 93–95 (VAS), Tyr165, Lys169, 192–195 (PSMT), and Ser207 each bind NADP(+). A disulfide bridge connects residues Cys158 and Cys166. Lys169 (proton donor) is an active-site residue.

Belongs to the NAD(P)-dependent epimerase/dehydratase family. Dihydroflavonol-4-reductase subfamily. As to quaternary structure, interacts with RAC1 in a GTP-dependent manner.

It is found in the cytoplasm. The catalysed reaction is (E)-cinnamaldehyde + NADP(+) + CoA = (E)-cinnamoyl-CoA + NADPH + H(+). It participates in aromatic compound metabolism; phenylpropanoid biosynthesis. With respect to regulation, activated by the small GTPase RAC1. Its function is as follows. Involved in the latter stages of lignin biosynthesis. Catalyzes one of the last steps of monolignol biosynthesis, the conversion of cinnamoyl-CoAs into their corresponding cinnamaldehydes. Probably involved in the formation of lignin in defense responses. This Oryza sativa subsp. japonica (Rice) protein is Cinnamoyl-CoA reductase 1.